The primary structure comprises 249 residues: Probable transcriptional regulatory protein aq_1575 (249 aa).

Belongs to the TACO1 family.

It is found in the cytoplasm. This chain is Probable transcriptional regulatory protein aq_1575, found in Aquifex aeolicus (strain VF5).